Here is a 1115-residue protein sequence, read N- to C-terminus: Iron-regulated protein FrpA (1115 aa).

Hemolysin-type calcium-binding repeat units lie at residues 755-772 (FGHN…NDTL), 773-790 (IGGA…SDTY), 901-918 (NGGL…NDLL), 919-936 (NGDA…NDTL), 937-954 (DGGE…NDAL), 955-972 (NGGE…NDTL), and 973-990 (IGGA…SDTY).

The protein belongs to the RTX prokaryotic toxin (TC 1.C.11) family.

The protein localises to the cell outer membrane. It is found in the secreted. May participate in the pathogenesis of meningococcal disease. The polypeptide is Iron-regulated protein FrpA (frpA) (Neisseria meningitidis serogroup C).